The following is a 153-amino-acid chain: MPTLFLFGASEGGLFDFDATLPLMAVQVVLLTFILNALFFKPVGRVVEEREDYVNTSRAEAKKKIAEVELLETELKDQLKEARLEAQKVILEAEQDSENLYKEALALATSEANASREKARREIDSQRDEALNQLKNEADNLGDLIIERLLAKK.

A helical membrane pass occupies residues Thr20 to Phe40.

The protein belongs to the ATPase B chain family. In terms of assembly, F-type ATPases have 2 components, F(1) - the catalytic core - and F(0) - the membrane proton channel. F(1) has five subunits: alpha(3), beta(3), gamma(1), delta(1), epsilon(1). F(0) has four main subunits: a(1), b(1), b'(1) and c(10-14). The alpha and beta chains form an alternating ring which encloses part of the gamma chain. F(1) is attached to F(0) by a central stalk formed by the gamma and epsilon chains, while a peripheral stalk is formed by the delta, b and b' chains.

The protein localises to the cellular thylakoid membrane. Functionally, f(1)F(0) ATP synthase produces ATP from ADP in the presence of a proton or sodium gradient. F-type ATPases consist of two structural domains, F(1) containing the extramembraneous catalytic core and F(0) containing the membrane proton channel, linked together by a central stalk and a peripheral stalk. During catalysis, ATP synthesis in the catalytic domain of F(1) is coupled via a rotary mechanism of the central stalk subunits to proton translocation. Its function is as follows. Component of the F(0) channel, it forms part of the peripheral stalk, linking F(1) to F(0). The b'-subunit is a diverged and duplicated form of b found in plants and photosynthetic bacteria. The chain is ATP synthase subunit b' from Prochlorococcus marinus (strain NATL2A).